The chain runs to 144 residues: Large ribosomal subunit protein uL16 (144 aa).

A compositionally biased stretch (basic residues) spans 1-19; that stretch reads MLLPKRVKYRRQHRPKTTG. Positions 1–23 are disordered; the sequence is MLLPKRVKYRRQHRPKTTGRSKG.

Belongs to the universal ribosomal protein uL16 family. As to quaternary structure, part of the 50S ribosomal subunit.

In terms of biological role, binds 23S rRNA and is also seen to make contacts with the A and possibly P site tRNAs. This Staphylococcus carnosus (strain TM300) protein is Large ribosomal subunit protein uL16.